Consider the following 271-residue polypeptide: Shikimate dehydrogenase (NADP(+)) (271 aa).

Shikimate is bound by residues 14–16 (SLS) and threonine 61. Lysine 65 functions as the Proton acceptor in the catalytic mechanism. Positions 86 and 101 each coordinate shikimate. NADP(+) is bound by residues 125–129 (GAGGA) and isoleucine 212. Tyrosine 214 contacts shikimate. Glycine 235 contacts NADP(+).

This sequence belongs to the shikimate dehydrogenase family. In terms of assembly, homodimer.

The catalysed reaction is shikimate + NADP(+) = 3-dehydroshikimate + NADPH + H(+). Its pathway is metabolic intermediate biosynthesis; chorismate biosynthesis; chorismate from D-erythrose 4-phosphate and phosphoenolpyruvate: step 4/7. Its function is as follows. Involved in the biosynthesis of the chorismate, which leads to the biosynthesis of aromatic amino acids. Catalyzes the reversible NADPH linked reduction of 3-dehydroshikimate (DHSA) to yield shikimate (SA). This chain is Shikimate dehydrogenase (NADP(+)), found in Clostridium perfringens (strain SM101 / Type A).